The following is a 352-amino-acid chain: C-C chemokine receptor type 5 (352 aa).

Residues Met1–Ala30 are Extracellular-facing. Tyr3 carries the post-translational modification Sulfotyrosine. O-linked (GalNAc...) serine glycosylation is found at Ser6 and Ser7. Residues Tyr10, Tyr14, and Tyr15 each carry the sulfotyrosine modification. 2 disulfides stabilise this stretch: Cys20–Cys269 and Cys101–Cys178. The helical transmembrane segment at Arg31–Cys58 threads the bilayer. The Cytoplasmic segment spans residues Lys59–Tyr68. Residues Leu69–Tyr89 form a helical membrane-spanning segment. Over Ala90 to Gln102 the chain is Extracellular. A helical transmembrane segment spans residues Leu103–Ile124. Residues Asp125–Thr141 lie on the Cytoplasmic side of the membrane. The chain crosses the membrane as a helical span at residues Val142 to Phe166. Topologically, residues Thr167–Ile198 are extracellular. A helical transmembrane segment spans residues Val199–Leu218. The Cytoplasmic portion of the chain corresponds to Lys219–Arg235. A helical membrane pass occupies residues Leu236–Phe260. Topologically, residues Gln261 to Gln277 are extracellular. The helical transmembrane segment at Ala278–Gly301 threads the bilayer. At Glu302–Leu352 the chain is on the cytoplasmic side. Residues Cys321, Cys323, and Cys324 are each lipidated (S-palmitoyl cysteine). A phosphoserine; by BARK1 mark is found at Ser336, Ser337, Ser342, and Ser349.

Belongs to the G-protein coupled receptor 1 family. As to quaternary structure, interacts with PRAF2. Efficient ligand binding to CCL3/MIP-1alpha and CCL4/MIP-1beta requires sulfation, O-glycosylation and sialic acid modifications. Glycosylation on Ser-6 is required for efficient binding of CCL4. Interacts with GRK2. Interacts with ARRB1 and ARRB2. Interacts with CNIH4. Interacts with S100A4; this interaction stimulates T-lymphocyte chemotaxis. Sulfated on at least 2 of the N-terminal tyrosines. Sulfation is required for efficient binding of the chemokines, CCL3 and CCL4. Post-translationally, palmitoylation in the C-terminal is important for cell surface expression. In terms of processing, phosphorylation on serine residues in the C-terminal is stimulated by binding CC chemokines especially by APO-RANTES. O-glycosylated, but not N-glycosylated. Ser-6 appears to be the major site even if Ser-7 may be also O-glycosylated. Also sialylated glycans present which contribute to chemokine binding. Thr-16 and Ser-17 may also be glycosylated and, if so, with small moieties such as a T-antigen.

The protein localises to the cell membrane. Its function is as follows. Receptor for a number of inflammatory CC-chemokines including CCL3/MIP-1-alpha, CCL4/MIP-1-beta and RANTES and subsequently transduces a signal by increasing the intracellular calcium ion level. May play a role in the control of granulocytic lineage proliferation or differentiation. Participates in T-lymphocyte migration to the infection site by acting as a chemotactic receptor. This Erythrocebus patas (Red guenon) protein is C-C chemokine receptor type 5 (CCR5).